The sequence spans 437 residues: Phosphomethylpyrimidine synthase (437 aa).

Substrate is bound by residues Asn69, Met98, Tyr127, His163, 185–187 (SRG), 226–229 (DACR), and Glu265. His269 is a Zn(2+) binding site. Tyr292 contacts substrate. His333 is a binding site for Zn(2+). Cys409, Cys412, and Cys416 together coordinate [4Fe-4S] cluster.

This sequence belongs to the ThiC family. The cofactor is [4Fe-4S] cluster.

It catalyses the reaction 5-amino-1-(5-phospho-beta-D-ribosyl)imidazole + S-adenosyl-L-methionine = 4-amino-2-methyl-5-(phosphooxymethyl)pyrimidine + CO + 5'-deoxyadenosine + formate + L-methionine + 3 H(+). Its pathway is cofactor biosynthesis; thiamine diphosphate biosynthesis. In terms of biological role, catalyzes the synthesis of the hydroxymethylpyrimidine phosphate (HMP-P) moiety of thiamine from aminoimidazole ribotide (AIR) in a radical S-adenosyl-L-methionine (SAM)-dependent reaction. The protein is Phosphomethylpyrimidine synthase of Clostridium botulinum (strain Okra / Type B1).